Reading from the N-terminus, the 249-residue chain is 1-(5-phosphoribosyl)-5-[(5-phosphoribosylamino)methylideneamino] imidazole-4-carboxamide isomerase (249 aa).

The active-site Proton acceptor is the Asp-8. Asp-131 (proton donor) is an active-site residue.

Belongs to the HisA/HisF family.

It is found in the cytoplasm. It carries out the reaction 1-(5-phospho-beta-D-ribosyl)-5-[(5-phospho-beta-D-ribosylamino)methylideneamino]imidazole-4-carboxamide = 5-[(5-phospho-1-deoxy-D-ribulos-1-ylimino)methylamino]-1-(5-phospho-beta-D-ribosyl)imidazole-4-carboxamide. It functions in the pathway amino-acid biosynthesis; L-histidine biosynthesis; L-histidine from 5-phospho-alpha-D-ribose 1-diphosphate: step 4/9. The chain is 1-(5-phosphoribosyl)-5-[(5-phosphoribosylamino)methylideneamino] imidazole-4-carboxamide isomerase from Leptothrix cholodnii (strain ATCC 51168 / LMG 8142 / SP-6) (Leptothrix discophora (strain SP-6)).